A 1175-amino-acid chain; its full sequence is MVNIAGPPPREVLEGPILAVSRQTKANIPGAPERKSFAKITEPIEVPGLLDIQLNSFAWLIGTPEWRARQQEELGDSVRVTSGLEDILEELSPIQDYSGNMSLSLSEPRFEDMKNTIDECKDKDINYSAPLYVTAEFINNETQEIKSQTVFIGDFPMMTDKGTFIVNGTERVVVSQLVRSPGVYFDQTIDKSTERPLHSVKVIPSRGAWLEFDVDKRDTVGVRIDRKRRQPVTVLLKALGWTTEQITERFGFSEIMMSTLESDGVSNTDEALLEIYRKQRPGEQPTRDLAQSLLDNSFFRAKRYDLAKVGRYKVNRKLGLGGDNEGLMTLTEEDIATTLEYLVRLHAGETTMTSPTGEVIPVETDDIDHFGNRRLRTVGELIQNQVRVGLSRMERVVRERMTTQDAESITPTSLINVRPVSAAIREFFGTSQLSQFMDQNNSLSGLTHKRRLSALGPGGLSRERAGIEVRDVHASHYGRMCPIETPEGPNIGLIGSLASYARVNAFGFIETPYRKVENGVLTDQIDYLTADEEDRFVVAQANVEHDADGKITADSVTVRVKNGDIQVVAPESVDYLDVSPRQMVSVATAMIPFLEHDDANRALMGANMQRQAVPLVRSEAPFVGTGMERAAAYDAGDLIINKKGGVVENVSADIITVMADDGTRETYILRKFERTNQGTCYNQTPLVNIGDRVEAGQVLADGPGTHNGEMSLGRNLLVAFMPWEGHNYEDAIILNQRVVEEDILTSIHIEEHEIDARDTKLGPEEITREIPNVSEDVLKDLDERGIVRIGADVRDGDILVGKVTPKGETELTPEERLLRAIFGEKAREVRDTSMKVPHGETGKVIGVRRFSRDDDDDLAPGVNEMIRVYVAQKRKIQDGDKLAGRHGNKGVVGKILPQEDMPFMPDGTPVDIILNTHGVPRRMNIGQVLEVHLGWLAAAGWKIDTEDPANAELLKTLPEDLYDVPAGSLTATPVFDGATNEEIAGLLGNSRPNRDGDVMVDENGKATLFDGRSGEPFPYPVSVGYMYILKLHHLVDEKIHARSTGPYSMITQQPLGGKAQFGGQRFGEMEVWAMQAYGAAYTLQELLTIKSDDVVGRVKVYEAIVKGENIPDPGIPESFKVLLKELQSLCLNVEVLSADGTPMELSGSDDDEFDQAGASLGINLSRDERSDADIA.

The disordered stretch occupies residues 1142-1175 (PMELSGSDDDEFDQAGASLGINLSRDERSDADIA). The segment covering 1165-1175 (SRDERSDADIA) has biased composition (basic and acidic residues).

Belongs to the RNA polymerase beta chain family. In terms of assembly, the RNAP catalytic core consists of 2 alpha, 1 beta, 1 beta' and 1 omega subunit. When a sigma factor is associated with the core the holoenzyme is formed, which can initiate transcription.

It catalyses the reaction RNA(n) + a ribonucleoside 5'-triphosphate = RNA(n+1) + diphosphate. In terms of biological role, DNA-dependent RNA polymerase catalyzes the transcription of DNA into RNA using the four ribonucleoside triphosphates as substrates. The chain is DNA-directed RNA polymerase subunit beta from Corynebacterium diphtheriae (strain ATCC 700971 / NCTC 13129 / Biotype gravis).